Here is a 244-residue protein sequence, read N- to C-terminus: MQPPGPPPAYAPTNGDFTFVSSADAEDLSGSIASPDVKLNLGGDFIKESTATTFLRQRGYGWLLEVEDDDPEDNKPLLEELDIDLKDIYYKIRCVLMPMPSLGFNRQVVRDNPDFWGPLAVVLFFSMISLYGQFRVVSWIITIWIFGSLTIFLLARVLGGEVAYGQVLGVIGYSLLPLIVIAPVLLVVGSFEVVSTLIKLFGVFWAAYSAASLLVGEEFKTKKPLLIYPIFLLYIYFLSLYTGV.

Residues 1–113 (MQPPGPPPAY…FNRQVVRDNP (113 aa)) are Cytoplasmic-facing. Residues 114–134 (DFWGPLAVVLFFSMISLYGQF) traverse the membrane as a helical segment. The Extracellular portion of the chain corresponds to 135 to 138 (RVVS). The helical transmembrane segment at 139–159 (WIITIWIFGSLTIFLLARVLG) threads the bilayer. The Cytoplasmic portion of the chain corresponds to 160 to 166 (GEVAYGQ). A helical transmembrane segment spans residues 167 to 187 (VLGVIGYSLLPLIVIAPVLLV). The Extracellular portion of the chain corresponds to 188-195 (VGSFEVVS). Residues 196 to 216 (TLIKLFGVFWAAYSAASLLVG) traverse the membrane as a helical segment. Over 217-223 (EEFKTKK) the chain is Cytoplasmic. Residues 224-244 (PLLIYPIFLLYIYFLSLYTGV) traverse the membrane as a helical segment.

This sequence belongs to the YIP1 family. Interacts with YIPF3 and YIPF5. As to quaternary structure, (Microbial infection) Interacts with human papillomavirus (HPV) E5 proteins. In terms of tissue distribution, expressed in keratinocytes (at protein level).

The protein localises to the golgi apparatus. It localises to the cis-Golgi network membrane. Functionally, involved in the maintenance of the Golgi structure. The chain is Protein YIPF4 (YIPF4) from Homo sapiens (Human).